The primary structure comprises 451 residues: Tubulin alpha-1 chain (451 aa).

Residue Q11 coordinates GTP. Position 40 is an N6-acetyllysine (K40). GTP contacts are provided by E71, G144, T145, T179, N206, and N228. E71 lines the Mg(2+) pocket. The active site involves E254. Residues 432-451 (YEEVGADSAEGDEEDEGDEY) are disordered.

This sequence belongs to the tubulin family. Dimer of alpha and beta chains. A typical microtubule is a hollow water-filled tube with an outer diameter of 25 nm and an inner diameter of 15 nM. Alpha-beta heterodimers associate head-to-tail to form protofilaments running lengthwise along the microtubule wall with the beta-tubulin subunit facing the microtubule plus end conferring a structural polarity. Microtubules usually have 13 protofilaments but different protofilament numbers can be found in some organisms and specialized cells. Mg(2+) serves as cofactor. Undergoes a tyrosination/detyrosination cycle, the cyclic removal and re-addition of a C-terminal tyrosine residue by the enzymes tubulin tyrosine carboxypeptidase (TTCP) and tubulin tyrosine ligase (TTL), respectively. In terms of processing, acetylation of alpha chains at Lys-40 stabilizes microtubules and affects affinity and processivity of microtubule motors. This modification has a role in multiple cellular functions, ranging from cell motility, cell cycle progression or cell differentiation to intracellular trafficking and signaling.

It localises to the cytoplasm. It is found in the cytoskeleton. The enzyme catalyses GTP + H2O = GDP + phosphate + H(+). Its function is as follows. Tubulin is the major constituent of microtubules, a cylinder consisting of laterally associated linear protofilaments composed of alpha- and beta-tubulin heterodimers. Microtubules grow by the addition of GTP-tubulin dimers to the microtubule end, where a stabilizing cap forms. Below the cap, tubulin dimers are in GDP-bound state, owing to GTPase activity of alpha-tubulin. The chain is Tubulin alpha-1 chain from Gossypium hirsutum (Upland cotton).